Consider the following 109-residue polypeptide: Protein FAM32A-like (109 aa).

The disordered stretch occupies residues 1–48 (MSEYKSVQKGSLKLKGVSLPSKKKKKKNKEMKRLEEQVLTSENEEGTK). A compositionally biased stretch (low complexity) spans 9–20 (KGSLKLKGVSLP). Positions 21–30 (SKKKKKKNKE) are enriched in basic residues.

The protein belongs to the FAM32 family.

The protein localises to the nucleus. May induce G2 arrest and apoptosis. May also increase cell sensitivity to apoptotic stimuli. The protein is Protein FAM32A-like (fam32al) of Danio rerio (Zebrafish).